The chain runs to 675 residues: Protein PALS1 (675 aa).

Positions 1–345 are required for the correct localization of PALS1 and PATJ at cell-cell contacts and the normal formation of tight junctions and adherens junctions; the sequence is MTTSYMNGHV…QQIKPPPAKE (345 aa). A phosphoserine mark is found at S14 and S25. The interaction with PARD6B stretch occupies residues 21 to 140; sequence LDLASPEEYP…LKHIQHTLVD (120 aa). The disordered stretch occupies residues 51-79; sequence RRSAQLERIRQQQEDMRRRREEEGKKQEL. The span at 54–79 shows a compositional bias: basic and acidic residues; it reads AQLERIRQQQEDMRRRREEEGKKQEL. A phosphoserine mark is found at S83 and S84. L27 domains follow at residues 120-177 and 179-235; these read NILD…SKAS and PFPL…MQLE. The interaction with LIN7C stretch occupies residues 181–243; sequence PLIANVQDLV…LEPITDERVY (63 aa). A PDZ domain is found at 256–336; it reads IVRIEKARDI…TLTFVLIPSQ (81 aa). Residues 345-417 form the SH3 domain; sequence ETVIHVKAHF…PGKSFQQQRE (73 aa). In terms of domain architecture, Guanylate kinase-like spans 479–660; the sequence is KRPIILIGPQ…AYQELLRLIN (182 aa). 486–493 provides a ligand contact to ATP; it reads GPQNCGQN.

It belongs to the MAGUK family. As to quaternary structure, heterodimer with MPP1. Forms a heterotrimeric complex composed of PALS1, LIN7B and PATJ; the N-terminal L27 domain of PALS1 interacts with the L27 domain of PATJ and the C-terminal L27 domain of PALS1 interacts with the L27 domain of LIN7B. Component of a complex composed of PALS1, CRB1 and MPP4. Component of a complex whose core is composed of ARHGAP17, AMOT, PALS1, PATJ and PARD3/PAR3. Component of a complex composed of PALS1, CRB1 and EPB41L5. Within the complex, interacts (via HOOK domain) with EPB41L5 (via FERM domain), and interacts with CRB1 (via intracellular domain). Component of a complex composed of PALS1, MPP3 and CRB1; PALS1 acts as a bridging protein between MPP3 (via guanylate kinase-like domain) and CRB1. Component of a complex composed of CRB3, PALS1 and PATJ. As part of the Crumbs complex; interacts with WWP1, the interaction is enhanced by AMOTL2 and facilitates WWP1 localization to the plasma membrane. The Crumbs complex promotes monoubiquitination of AMOTL2 by WWP1, which activates the Hippo signaling pathway. Interacts (via PDZ domain) with PATJ (via N-terminus). Interacts with EZR. Interacts (via PDZ domain) with CRB1 (via C-terminal ERLI motif). While the PDZ domain is sufficient for interaction with CRB1, the adjacent SH3 and guanylate kinase-like domains are likely to contribute to a high affinity interaction. Interacts with WWTR1/TAZ (via WW domain). Interacts with MPP7. Interacts (via PDZ domain) with CRB3 (via C-terminus). Interacts with LIN7C. Interacts with MPDZ. Interacts with PARD6B. Interacts with SC6A1. Interacts with CDH5; the interaction promotes PALS1 localization to cell junctions and is required for CDH5-mediated vascular lumen formation and endothelial cell. Interacts with NPHP1 (via coiled coil and SH3 domains). Interacts with NPHP4. Interacts with CRB2. As to expression, expressed in the retinal pigment epithelium (at protein level). Expressed in the vascular plexus of the retina (at protein level). In the brain, expressed in the dentate gyrus of hippocampus, striatum and cerebellum (at protein level). Expressed in the sciatic nerve (at protein level). Expressed in the kidney nephron (at protein level). Expressed in the lung, and heart. Expressed in placenta, brain, skeletal muscles, pancreas and liver.

It localises to the golgi apparatus. The protein localises to the cell membrane. Its subcellular location is the endomembrane system. It is found in the cell junction. The protein resides in the tight junction. It localises to the adherens junction. The protein localises to the cell projection. Its subcellular location is the axon. It is found in the perikaryon. The protein resides in the apical cell membrane. In terms of biological role, plays a role in tight junction biogenesis and in the establishment of cell polarity in epithelial cells. Also involved in adherens junction biogenesis by ensuring correct localization of the exocyst complex protein EXOC4/SEC8 which allows trafficking of adherens junction structural component CDH1 to the cell surface. Plays a role through its interaction with CDH5 in vascular lumen formation and endothelial membrane polarity. Required during embryonic and postnatal retinal development. Required for the maintenance of cerebellar progenitor cells in an undifferentiated proliferative state, preventing premature differentiation, and is required for cerebellar histogenesis, fissure formation, cerebellar layer organization and cortical development. Plays a role in neuronal progenitor cell survival, potentially via promotion of mTOR signaling. Plays a role in the radial and longitudinal extension of the myelin sheath in Schwann cells. May modulate SC6A1/GAT1-mediated GABA uptake by stabilizing the transporter. May play a role in the T-cell receptor-mediated activation of NF-kappa-B. Required for localization of EZR to the apical membrane of parietal cells and may play a role in the dynamic remodeling of the apical cytoskeleton. Required for the normal polarized localization of the vesicular marker STX4. Required for the correct trafficking of the myelin proteins PMP22 and MAG. Involved in promoting phosphorylation and cytoplasmic retention of transcriptional coactivators YAP1 and WWTR1/TAZ which leads to suppression of TGFB1-dependent transcription of target genes such as CCN2/CTGF, SERPINE1/PAI1, SNAI1/SNAIL1 and SMAD7. The polypeptide is Protein PALS1 (Mus musculus (Mouse)).